The chain runs to 146 residues: Large ribosomal subunit protein uL15 (146 aa).

Residues Met-1–Glu-51 are disordered. Positions Lys-10–Val-19 are enriched in basic residues. 2 stretches are compositionally biased toward gly residues: residues Thr-23–Gln-35 and Ser-42–Glu-51.

The protein belongs to the universal ribosomal protein uL15 family. In terms of assembly, part of the 50S ribosomal subunit.

In terms of biological role, binds to the 23S rRNA. The chain is Large ribosomal subunit protein uL15 from Streptococcus equi subsp. equi (strain 4047).